Consider the following 137-residue polypeptide: Large ribosomal subunit protein uL16 (137 aa).

It belongs to the universal ribosomal protein uL16 family. Part of the 50S ribosomal subunit.

Its function is as follows. Binds 23S rRNA and is also seen to make contacts with the A and possibly P site tRNAs. This is Large ribosomal subunit protein uL16 from Marinomonas sp. (strain MWYL1).